Reading from the N-terminus, the 421-residue chain is MDKIVIKGGNKLTGEVKVEGAKNAVLPILTASLLASDKPSKLVNVPALSDVETINNVLTTLNADVTYKKDENAVVVDATKTLNEEAPYEYVSKMRASILVMGPLLARLGHAIVALPGGCAIGSRPIEQHIKGFEALGAEIHLENGNIYANAKDGLKGTSIHLDFPSVGATQNIIMAASLAKGKTLIENAAKEPEIVDLANYINEMGGRITGAGTDTITINGVESLHGVEHAIIPDRIEAGTLLIAGAITRGDIFVRGAIKEHMASLVYKLEEMGVELDYQEDGIRVRAEGELQPVDIKTLPHPGFPTDMQSQMMALLLTANGHKVVTETVFENRFMHVAEFKRMNANINVEGRSAKLEGKSQLQGAQVKATDLRAAAALILAGLVADGKTSVTELTHLDRGYVDLHGKLKQLGADIERIND.

22–23 (KN) contributes to the phosphoenolpyruvate binding site. Arg95 contacts UDP-N-acetyl-alpha-D-glucosamine. The active-site Proton donor is the Cys119. Cys119 bears the 2-(S-cysteinyl)pyruvic acid O-phosphothioketal mark. UDP-N-acetyl-alpha-D-glucosamine contacts are provided by residues 124–128 (RPIEQ), Asp308, and Val330.

Belongs to the EPSP synthase family. MurA subfamily.

It localises to the cytoplasm. The enzyme catalyses phosphoenolpyruvate + UDP-N-acetyl-alpha-D-glucosamine = UDP-N-acetyl-3-O-(1-carboxyvinyl)-alpha-D-glucosamine + phosphate. Its pathway is cell wall biogenesis; peptidoglycan biosynthesis. Its function is as follows. Cell wall formation. Adds enolpyruvyl to UDP-N-acetylglucosamine. This is UDP-N-acetylglucosamine 1-carboxyvinyltransferase 1 from Staphylococcus aureus (strain MW2).